Consider the following 155-residue polypeptide: Deoxyuridine 5'-triphosphate nucleotidohydrolase (155 aa).

Substrate contacts are provided by residues 71–73, N84, 88–90, and K98; these read RSG and TID.

It belongs to the dUTPase family. Mg(2+) is required as a cofactor.

It carries out the reaction dUTP + H2O = dUMP + diphosphate + H(+). The protein operates within pyrimidine metabolism; dUMP biosynthesis; dUMP from dCTP (dUTP route): step 2/2. In terms of biological role, this enzyme is involved in nucleotide metabolism: it produces dUMP, the immediate precursor of thymidine nucleotides and it decreases the intracellular concentration of dUTP so that uracil cannot be incorporated into DNA. This Corynebacterium jeikeium (strain K411) protein is Deoxyuridine 5'-triphosphate nucleotidohydrolase.